The primary structure comprises 647 residues: XK-related protein 4 (647 aa).

A helical membrane pass occupies residues 142–162 (WFGLTLFFVVLGSLSVQVFSF). Residues 193–238 (VSSGSAAGEGEARPSTPQRQASNASKSNIAATNSGSNSNGATRTSG) form a disordered region. Serine 197 carries the phosphoserine modification. The span at 207-236 (STPQRQASNASKSNIAATNSGSNSNGATRT) shows a compositional bias: polar residues. Transmembrane regions (helical) follow at residues 245–265 (CSFC…GQVW), 328–348 (LQAL…WALA), 362–382 (KPIS…TIAA), 393–415 (VFQL…WIVH), 425–445 (WEEI…WFNV), 454–474 (LFIY…LWYL), and 484–504 (FAIP…VFML).

Belongs to the XK family. In terms of assembly, homodimer; homodimerization takes place upon caspase cleavage. Interacts with the processed C-terminus of XRCC4 (protein XRCC4, C-terminus); interaction promotes the phospholipid scramblase activity. Post-translationally, undergoes proteolytic processing by caspase-3 (CASP3), caspase-6 (CASP6) and caspase-7 (CASP7) to generate the XK-related protein 4, processed form, leading to its activation.

The protein resides in the cell membrane. It carries out the reaction a 1,2-diacyl-sn-glycero-3-phospho-L-serine(in) = a 1,2-diacyl-sn-glycero-3-phospho-L-serine(out). With respect to regulation, phospholipid scramblase activity is activated upon caspase cleavage to generate the XK-related protein 4, processed form. Does not act prior the onset of apoptosis. Homodimerizes upon caspase cleavage. Phospholipid scramblase activity is activated following interaction with the processed C-terminus of XRCC4 (protein XRCC4, C-terminus). In terms of biological role, phospholipid scramblase that promotes phosphatidylserine exposure on apoptotic cell surface. Phosphatidylserine is a specific marker only present at the surface of apoptotic cells and acts as a specific signal for engulfment. This chain is XK-related protein 4, found in Rattus norvegicus (Rat).